Reading from the N-terminus, the 499-residue chain is Histidine ammonia-lyase (499 aa).

The segment at residues 142–144 (ASG) is a cross-link (5-imidazolinone (Ala-Gly)). S143 bears the 2,3-didehydroalanine (Ser) mark.

It belongs to the PAL/histidase family. In terms of processing, contains an active site 4-methylidene-imidazol-5-one (MIO), which is formed autocatalytically by cyclization and dehydration of residues Ala-Ser-Gly.

The protein resides in the cytoplasm. The enzyme catalyses L-histidine = trans-urocanate + NH4(+). It participates in amino-acid degradation; L-histidine degradation into L-glutamate; N-formimidoyl-L-glutamate from L-histidine: step 1/3. In Staphylococcus saprophyticus subsp. saprophyticus (strain ATCC 15305 / DSM 20229 / NCIMB 8711 / NCTC 7292 / S-41), this protein is Histidine ammonia-lyase.